The sequence spans 316 residues: Ribosomal protein L11 methyltransferase (316 aa).

Threonine 157, glycine 178, aspartate 200, and asparagine 243 together coordinate S-adenosyl-L-methionine.

This sequence belongs to the methyltransferase superfamily. PrmA family.

It localises to the cytoplasm. It carries out the reaction L-lysyl-[protein] + 3 S-adenosyl-L-methionine = N(6),N(6),N(6)-trimethyl-L-lysyl-[protein] + 3 S-adenosyl-L-homocysteine + 3 H(+). In terms of biological role, methylates ribosomal protein L11. The protein is Ribosomal protein L11 methyltransferase of Streptococcus pneumoniae (strain Hungary19A-6).